A 552-amino-acid chain; its full sequence is Probable protein kinase UbiB (552 aa).

Residues 121 to 504 (HFDTVPLASA…QGLQRRVVNA (384 aa)) form the Protein kinase domain. Residues 127–135 (LASASISQV) and Lys-149 each bind ATP. Asp-284 (proton acceptor) is an active-site residue. 2 consecutive transmembrane segments (helical) span residues 501-521 (VVNA…YGLH) and 530-550 (IPVW…SAWW).

The protein belongs to the ABC1 family. UbiB subfamily.

The protein resides in the cell inner membrane. Its pathway is cofactor biosynthesis; ubiquinone biosynthesis [regulation]. Functionally, is probably a protein kinase regulator of UbiI activity which is involved in aerobic coenzyme Q (ubiquinone) biosynthesis. The protein is Probable protein kinase UbiB of Xylella fastidiosa (strain M12).